Consider the following 3305-residue polypeptide: Microtubule-actin cross-linking factor 1, isoforms 6/7 (3305 aa).

Disordered regions lie at residues 1–24 (MGKP…GEDE), 108–140 (VQKS…MPPN), 152–202 (LSEV…KSVD), 239–272 (AAAS…GFSE), 333–381 (EEWE…VAVS), 941–1007 (EPAI…PEWS), and 2865–2896 (SVEP…MPIL). Basic and acidic residues predominate over residues 120–129 (PNAERKDNVN). EF-hand domains are found at residues 2958-2993 (HKKS…SKFP) and 2994-3029 (TTKL…NKDA). Residues Asp-2971, Asp-2973, Asp-2975, Lys-2977, Glu-2982, Asp-3007, Asp-3009, Asp-3011, Tyr-3013, and Glu-3018 each contribute to the Ca(2+) site. Residues 3034-3106 (TDADKIEDEV…EFLVKNDPCR (73 aa)) form the GAR domain. The segment at 3122-3305 (PEGASQGMTP…ASPRTPGPKR (184 aa)) is disordered. Residues 3142–3176 (SSRAASPTRSSSSASQSNHSCTSMPSSPATPASGT) are compositionally biased toward low complexity. Residues 3193–3212 (FHSSRTSLAGDTSNSSSPAS) are compositionally biased toward polar residues. Residues 3227 to 3241 (SRPGSRAGSRAGSRA) show a composition bias toward low complexity. Positions 3256 to 3266 (ETQSACSDTSE) are enriched in polar residues. Residues 3267 to 3278 (SSAAGGQGSSRR) are compositionally biased toward low complexity.

It localises to the cytoplasm. Its subcellular location is the cytoskeleton. The chain is Microtubule-actin cross-linking factor 1, isoforms 6/7 from Mus musculus (Mouse).